The primary structure comprises 315 residues: Olfactory receptor 3A1 (315 aa).

The Extracellular portion of the chain corresponds to 1–28 (MQPESGANGTVIAEFILLGLLEAPGLQP). N-linked (GlcNAc...) asparagine glycosylation is present at asparagine 8. The chain crosses the membrane as a helical span at residues 29 to 52 (VVFVLFLFAYLVTVRGNLSILAAV). Topologically, residues 53–60 (LVEPKLHT) are cytoplasmic. The helical transmembrane segment at 61-82 (PMYFFLGNLSVLDVGCISVTVP) threads the bilayer. Residues 83–103 (SMLSRLLSRKRAVPCGACLTQ) lie on the Extracellular side of the membrane. Cysteines 100 and 192 form a disulfide. Residues 104 to 123 (LFFFHLFVGVDCFLLTAMAY) traverse the membrane as a helical segment. Over 124–143 (DRFLAICRPLTYSTRMSQTV) the chain is Cytoplasmic. A helical transmembrane segment spans residues 144–161 (QRMLVAASWACAFTNALT). At 162–199 (HTVAMSTLNFCGPNVINHFYCDLPQLFQLSCSSTQLNE) the chain is on the extracellular side. The helical transmembrane segment at 200-223 (LLLFAVGFIMAGTPMALIVISYIH) threads the bilayer. Over 224–240 (VAAAVLRIRSVEGRKKA) the chain is Cytoplasmic. Residues 241–264 (FSTCGSHLTVVAIFYGSGIFNYMR) traverse the membrane as a helical segment. At 265 to 275 (LGSTKLSDKDK) the chain is on the extracellular side. A helical transmembrane segment spans residues 276 to 295 (AVGIFNTVINPMLNPIIYSF). Topologically, residues 296 to 315 (RNPDVQSAIWRMLTGRRSLA) are cytoplasmic.

Belongs to the G-protein coupled receptor 1 family.

Its subcellular location is the cell membrane. In terms of biological role, odorant receptor. This is Olfactory receptor 3A1 (OR3A1) from Homo sapiens (Human).